A 205-amino-acid polypeptide reads, in one-letter code: High frequency lysogenization protein HflD homolog (205 aa).

The protein belongs to the HflD family.

It is found in the cytoplasm. It localises to the cell inner membrane. This chain is High frequency lysogenization protein HflD homolog, found in Haemophilus influenzae (strain 86-028NP).